Here is a 185-residue protein sequence, read N- to C-terminus: MATALGFRCLFRTRPAPLCRHVDRLWRNPRRGHRLSPADDELYQRTRISLLQSEFPQAVYIDSYSSRGFTICGNRVFGPCVLLPQTVVQWNVGSHQDITEESFSLFWMLEPRIEIVVVGTGNKTERLHPQVLQAMRQRGIAVEVQDTPNACATFNFLCHEGRVTGAALIPPPGETALASLGQASE.

This sequence belongs to the NDUFAF3 family. Interacts with NDUFAF4, NDUFS2 and NDUFS3. Strongly expressed in testis and weakly expressed in the epididymis. Expressed in spermatocytes.

The protein resides in the nucleus. Its subcellular location is the mitochondrion inner membrane. In terms of biological role, essential factor for the assembly of mitochondrial NADH:ubiquinone oxidoreductase complex (complex I). This Mus musculus (Mouse) protein is NADH dehydrogenase [ubiquinone] 1 alpha subcomplex assembly factor 3 (Ndufaf3).